The chain runs to 243 residues: MGDTPFKATSMEDLNDTISKIINYRFKNDAILEEALTHPSLNKRNSKNQIENYERLEFLGDSILNMIVSAILFRLFPKEKEGALARRKTDLVCGNTIANVAKEIKLGNFIIMNNSERCNGGKRNLKNLENALEALIGAIYIDGGFANVKKFVTKHWEERAKGMLSLPQDPKTSLQEWTQKNKLPLPEYELMKQTGPAHSPEFTISICIENYGKVFACASSKKVAEQKAAELMLEKINNSEKTI.

The RNase III domain maps to 15 to 144; the sequence is NDTISKIINY…LIGAIYIDGG (130 aa). Glu57 lines the Mg(2+) pocket. Asp61 is a catalytic residue. Residues Asn130 and Glu133 each coordinate Mg(2+). Glu133 is a catalytic residue. Residues 169–238 enclose the DRBM domain; that stretch reads DPKTSLQEWT…AELMLEKINN (70 aa).

The protein belongs to the ribonuclease III family. In terms of assembly, homodimer. It depends on Mg(2+) as a cofactor.

It localises to the cytoplasm. The catalysed reaction is Endonucleolytic cleavage to 5'-phosphomonoester.. Digests double-stranded RNA. Involved in the processing of primary rRNA transcript to yield the immediate precursors to the large and small rRNAs (23S and 16S). Processes some mRNAs, and tRNAs when they are encoded in the rRNA operon. Processes pre-crRNA and tracrRNA of type II CRISPR loci if present in the organism. This is Ribonuclease 3 from Wolbachia sp. subsp. Brugia malayi (strain TRS).